The following is a 138-amino-acid chain: Iron sulfur cluster assembly protein 1 (138 aa).

Belongs to the NifU family. In terms of assembly, component of the core Fe-S cluster (ISC) assembly machinery. [2Fe-2S] cluster serves as cofactor.

Its subcellular location is the cytoplasm. It functions in the pathway cofactor biosynthesis; iron-sulfur cluster biosynthesis. Scaffold protein for the de novo synthesis of iron-sulfur (Fe-S) clusters within mitosomes, which is required for maturation of both [2Fe-2S] and [4Fe-4S] proteins. First, a [2Fe-2S] cluster is transiently assembled on the scaffold protein ISU1. In a second step, the cluster is released from ISU1, transferred to a glutaredoxin, followed by the formation of [2Fe-2S] proteins, the synthesis of [4Fe-4S] clusters and their target-specific insertion into the recipient apoproteins. Cluster assembly on ISU1 depends on the function of the cysteine desulfurase complex NFS1-ISD11, which serves as the sulfur donor for cluster synthesis, the iron-binding protein frataxin as the putative iron donor, and the electron transfer chain comprised of ferredoxin reductase and ferredoxin, which receive their electrons from NADH. In Trachipleistophora hominis (Microsporidian parasite), this protein is Iron sulfur cluster assembly protein 1 (ISU1).